A 248-amino-acid chain; its full sequence is UPF0246 protein MYPE6270 (248 aa).

The protein belongs to the UPF0246 family.

This Malacoplasma penetrans (strain HF-2) (Mycoplasma penetrans) protein is UPF0246 protein MYPE6270.